A 293-amino-acid polypeptide reads, in one-letter code: 6-phospho-5-dehydro-2-deoxy-D-gluconate aldolase (293 aa).

The active-site Proton donor is the aspartate 85. The Zn(2+) site is built by histidine 86 and histidine 180. Residue glycine 181 participates in dihydroxyacetone phosphate binding. Histidine 208 provides a ligand contact to Zn(2+). Dihydroxyacetone phosphate contacts are provided by residues 209 to 211 and 230 to 233; these read GAS and NINT. Threonine 233 is modified (phosphothreonine).

Belongs to the class II fructose-bisphosphate aldolase family. IolJ subfamily. The cofactor is Zn(2+).

The catalysed reaction is 6-phospho-5-dehydro-2-deoxy-D-gluconate = 3-oxopropanoate + dihydroxyacetone phosphate. It functions in the pathway polyol metabolism; myo-inositol degradation into acetyl-CoA; acetyl-CoA from myo-inositol: step 6/7. In terms of biological role, produces dihydroxyacetone phosphate (DHAP or glycerone phosphate) and malonic semialdehyde (MSA or 3-oxopropanoate) from 6-phospho-5-dehydro-2-deoxy-D-gluconate (DKGP). This chain is 6-phospho-5-dehydro-2-deoxy-D-gluconate aldolase (iolJ), found in Shouchella clausii (strain KSM-K16) (Alkalihalobacillus clausii).